A 531-amino-acid chain; its full sequence is Na(+)/H(+) antiporter NhaB (531 aa).

The next 12 membrane-spanning stretches (helical) occupy residues 13-33 (FLGK…IINP), 34-54 (LVFF…EFIF), 90-110 (LVAN…IYFM), 121-141 (ILIG…TAAF), 145-165 (FLDA…FYAI), 206-226 (LLMH…VGEP), 242-262 (FIIR…LTCV), 308-328 (VIAV…GLIG), 352-372 (EEAL…AVII), 394-414 (LALF…VFVG), 456-476 (GQAA…QLSY), and 482-502 (MALP…SFLL).

The protein belongs to the NhaB Na(+)/H(+) (TC 2.A.34) antiporter family.

Its subcellular location is the cell inner membrane. The catalysed reaction is 2 Na(+)(in) + 3 H(+)(out) = 2 Na(+)(out) + 3 H(+)(in). Functionally, na(+)/H(+) antiporter that extrudes sodium in exchange for external protons. This is Na(+)/H(+) antiporter NhaB from Aliivibrio salmonicida (strain LFI1238) (Vibrio salmonicida (strain LFI1238)).